The following is a 497-amino-acid chain: Cobyrinate a,c-diamide synthase (497 aa).

Residues 273 to 478 (RIGIALDEAF…AHLHGVAYRE (206 aa)) enclose the GATase cobBQ-type domain. Residue Cys-355 is the Nucleophile of the active site.

Belongs to the CobB/CbiA family. It depends on Mg(2+) as a cofactor.

It carries out the reaction cob(II)yrinate + 2 L-glutamine + 2 ATP + 2 H2O = cob(II)yrinate a,c diamide + 2 L-glutamate + 2 ADP + 2 phosphate + 2 H(+). It catalyses the reaction Ni-sirohydrochlorin + 2 L-glutamine + 2 ATP + 2 H2O = Ni-sirohydrochlorin a,c-diamide + 2 L-glutamate + 2 ADP + 2 phosphate + 2 H(+). It functions in the pathway cofactor biosynthesis; adenosylcobalamin biosynthesis; cob(II)yrinate a,c-diamide from sirohydrochlorin (anaerobic route): step 10/10. In terms of biological role, catalyzes the ATP-dependent amidation of the two carboxylate groups at positions a and c of cobyrinate, using either L-glutamine or ammonia as the nitrogen source (Potential). Involved in the biosynthesis of the unique nickel-containing tetrapyrrole coenzyme F430, the prosthetic group of methyl-coenzyme M reductase (MCR), which plays a key role in methanogenesis and anaerobic methane oxidation. Catalyzes the ATP-dependent amidation of the two carboxylate groups at positions a and c of Ni-sirohydrochlorin, using L-glutamine or ammonia as the nitrogen source. This Methanosarcina acetivorans (strain ATCC 35395 / DSM 2834 / JCM 12185 / C2A) protein is Cobyrinate a,c-diamide synthase.